A 154-amino-acid polypeptide reads, in one-letter code: Myoglobin (154 aa).

The region spanning 2–148 (GLSDGEWQLV…FRNDMAAKYK (147 aa)) is the Globin domain. The residue at position 4 (S4) is a Phosphoserine. H65 lines the nitrite pocket. H65 contributes to the O2 binding site. T68 bears the Phosphothreonine mark. A heme b-binding site is contributed by H94.

The protein belongs to the globin family. In terms of assembly, monomeric.

It localises to the cytoplasm. The protein localises to the sarcoplasm. The enzyme catalyses Fe(III)-heme b-[protein] + nitric oxide + H2O = Fe(II)-heme b-[protein] + nitrite + 2 H(+). The catalysed reaction is H2O2 + AH2 = A + 2 H2O. Its function is as follows. Monomeric heme protein which primary function is to store oxygen and facilitate its diffusion within muscle tissues. Reversibly binds oxygen through a pentacoordinated heme iron and enables its timely and efficient release as needed during periods of heightened demand. Depending on the oxidative conditions of tissues and cells, and in addition to its ability to bind oxygen, it also has a nitrite reductase activity whereby it regulates the production of bioactive nitric oxide. Under stress conditions, like hypoxia and anoxia, it also protects cells against reactive oxygen species thanks to its pseudoperoxidase activity. This is Myoglobin (MB) from Ochotona curzoniae (Black-lipped pika).